The sequence spans 471 residues: uncharacterized protein (471 aa).

The next 11 membrane-spanning stretches (helical) occupy residues 15–35 (LWGP…TILL), 66–86 (PLQA…IVGV), 89–109 (AIMF…LFAM), 147–167 (WLGV…IMVQ), 179–199 (FSFN…LVVI), 210–230 (EFVV…IVLM), 237–257 (AFFS…GGFA), 303–323 (VIGI…IVLA), 353–373 (GYFV…VVIF), 386–406 (LAGH…AAGG), and 410–430 (IWGV…IALL).

This sequence belongs to the alanine or glycine:cation symporter (AGCS) (TC 2.A.25) family.

It is found in the cell membrane. This is an uncharacterized protein from Bacillus subtilis (strain 168).